The primary structure comprises 222 residues: FCS-Like Zinc finger 13 (222 aa).

Residues 149-192 (EFLSSCCLCKKKLQGKDIYMYKGEMGFCSAECRSVQIMNDERQE) form an FLZ-type zinc finger.

The protein belongs to the FLZ family. In terms of assembly, interacts with KIN10 and KIN11 via its FLZ-type zinc finger domain. Interacts with KINB1, KINB2, KINB3 and SNF4 via its N-terminal part.

It localises to the nucleus. Its subcellular location is the cytoplasm. In terms of biological role, may act as an adapter to facilitate the interaction of SnRK1 complex with effector proteins, conferring tissue- and stimulus-type specific differences in the SnRK1 regulation pathway. This Arabidopsis thaliana (Mouse-ear cress) protein is FCS-Like Zinc finger 13.